Here is a 393-residue protein sequence, read N- to C-terminus: 26S proteasome regulatory subunit RPN9 (393 aa).

The 169-residue stretch at 187-355 (SFYYTSLLYL…ELVTISWVQP (169 aa)) folds into the PCI domain.

It belongs to the proteasome subunit S11 family.

In terms of biological role, acts as a regulatory subunit of the 26S proteasome which is involved in the ATP-dependent degradation of ubiquitinated proteins. The polypeptide is 26S proteasome regulatory subunit RPN9 (RPN9) (Saccharomyces cerevisiae (strain ATCC 204508 / S288c) (Baker's yeast)).